The chain runs to 308 residues: MAAVINNAMLEAILAEIRPLIGRGKVADYIPALASVSGDKLGIAISTVDGQHFAAGDAHERFSIQSISKVLSLVVAMNHYQEEEIWQRVGKDPSGQPFNSLLQLEIEQGKPRNPFINAGALVVCDMLQSRLSAPRQRMLEIVRRLSGVADIAYDPVVARSEFEHSARNAAIAWLMKSFGNFHNDVATVLQNYFHYCSLEMSCVELARTFLFLADRGIAPHLEAPVIAPIQSRQVNALMMTSGMYQNAGEFAWRVGLPAKSGVGGGIVAIVPQEMAIAVWSPELDDAGNSLAGVALLEKLTQRMGRSVF.

The substrate site is built by serine 66, asparagine 117, glutamate 161, asparagine 168, tyrosine 192, tyrosine 244, and valine 262.

Belongs to the glutaminase family. In terms of assembly, homotetramer.

The enzyme catalyses L-glutamine + H2O = L-glutamate + NH4(+). In Klebsiella pneumoniae (strain 342), this protein is Glutaminase.